The following is a 205-amino-acid chain: Large ribosomal subunit protein uL4 (205 aa).

A disordered region spans residues 43–95 (RSGNRAQKDRAEVKHSTKKPWRQKGTGRARAGMTSSPLWRGGGRAFPNSPEEN). Residues 48–57 (AQKDRAEVKH) are compositionally biased toward basic and acidic residues. Positions 58-69 (STKKPWRQKGTG) are enriched in basic residues.

This sequence belongs to the universal ribosomal protein uL4 family. In terms of assembly, part of the 50S ribosomal subunit.

Functionally, one of the primary rRNA binding proteins, this protein initially binds near the 5'-end of the 23S rRNA. It is important during the early stages of 50S assembly. It makes multiple contacts with different domains of the 23S rRNA in the assembled 50S subunit and ribosome. In terms of biological role, forms part of the polypeptide exit tunnel. The sequence is that of Large ribosomal subunit protein uL4 from Bordetella pertussis (strain Tohama I / ATCC BAA-589 / NCTC 13251).